The following is a 422-amino-acid chain: Secernin-3 (422 aa).

The propeptide occupies 1–5; sequence MEPCS. Residue cysteine 6 is part of the active site. Cysteine 6 carries the glyoxylic acid (Cys); alternate modification. Cysteine 6 carries the pyruvic acid (Cys); alternate modification.

This sequence belongs to the peptidase C69 family. Secernin subfamily.

Functionally, plays a role in thermal nociception. This chain is Secernin-3 (SCRN3), found in Bos taurus (Bovine).